The primary structure comprises 267 residues: Non-homologous end joining protein Ku (267 aa).

In terms of domain architecture, Ku spans 11–195; it reads AVGQVSCAVA…KVKGEMLELA (185 aa). Residues 229–267 are disordered; it reads GRKPKRKAAPKKAREPSDLMAALRESVAATERPRRRKAG.

This sequence belongs to the prokaryotic Ku family. Homodimer. Interacts with LigD.

With LigD forms a non-homologous end joining (NHEJ) DNA repair enzyme, which repairs dsDNA breaks with reduced fidelity. Binds linear dsDNA with 5'- and 3'- overhangs but not closed circular dsDNA nor ssDNA. Recruits and stimulates the ligase activity of LigD. This is Non-homologous end joining protein Ku from Cereibacter sphaeroides (strain KD131 / KCTC 12085) (Rhodobacter sphaeroides).